Reading from the N-terminus, the 504-residue chain is Putative pentatricopeptide repeat-containing protein At3g28640 (504 aa).

9 PPR repeats span residues 77–107, 115–149, 151–181, 182–216, 217–251, 253–287, 288–319, 320–350, and 356–390; these read NSFV…MVKE, SYLT…GVFL, DSHV…IPQP, DVVK…GLEP, DEFS…SWIE, DVFV…NVFS, WAAL…GIKP, DSVV…MEAR, and KHEH…PLAS. A type E motif region spans residues 391-470; the sequence is VWGALLNGCR…TPGWSVLEVD (80 aa). The tract at residues 471-501 is type E(+) motif; sequence GNVTKFVSGDVSHPNLLQIHTVIHLLSVDAL.

Belongs to the PPR family. PCMP-E subfamily.

The chain is Putative pentatricopeptide repeat-containing protein At3g28640 (PCMP-E79) from Arabidopsis thaliana (Mouse-ear cress).